The chain runs to 603 residues: DNA mismatch repair protein MutL (603 aa).

The segment at 361–383 (KETPTLFSKPTIPEYVPSDEDAP) is disordered.

Belongs to the DNA mismatch repair MutL/HexB family.

Functionally, this protein is involved in the repair of mismatches in DNA. It is required for dam-dependent methyl-directed DNA mismatch repair. May act as a 'molecular matchmaker', a protein that promotes the formation of a stable complex between two or more DNA-binding proteins in an ATP-dependent manner without itself being part of a final effector complex. This is DNA mismatch repair protein MutL from Listeria monocytogenes serotype 4b (strain CLIP80459).